Consider the following 286-residue polypeptide: Polyamine aminopropyltransferase (286 aa).

The PABS domain maps to 5 to 238 (TMWHETLHDQ…GIMTFAWATD (234 aa)). Position 33 (Gln33) interacts with S-methyl-5'-thioadenosine. Spermidine is bound by residues His64 and Asp88. S-methyl-5'-thioadenosine-binding positions include Glu108 and 140–141 (DG). The Proton acceptor role is filled by Asp158. 158–161 (DCTD) is a binding site for spermidine. Residue Pro165 coordinates S-methyl-5'-thioadenosine.

It belongs to the spermidine/spermine synthase family. Homodimer or homotetramer.

The protein resides in the cytoplasm. The enzyme catalyses S-adenosyl 3-(methylsulfanyl)propylamine + putrescine = S-methyl-5'-thioadenosine + spermidine + H(+). Its pathway is amine and polyamine biosynthesis; spermidine biosynthesis; spermidine from putrescine: step 1/1. Its function is as follows. Catalyzes the irreversible transfer of a propylamine group from the amino donor S-adenosylmethioninamine (decarboxy-AdoMet) to putrescine (1,4-diaminobutane) to yield spermidine. The sequence is that of Polyamine aminopropyltransferase from Salmonella schwarzengrund (strain CVM19633).